The sequence spans 141 residues: Protein NrdI (141 aa).

The protein belongs to the NrdI family.

In terms of biological role, probably involved in ribonucleotide reductase function. This Bifidobacterium animalis subsp. lactis (strain AD011) protein is Protein NrdI.